The chain runs to 572 residues: uncharacterized protein (572 aa).

A disordered region spans residues 543-572; it reads AYKKSSNTNSTTNSMNPRRSTVSSEDWVLN. Residues 547–563 show a composition bias toward low complexity; that stretch reads SSNTNSTTNSMNPRRST.

This is an uncharacterized protein from Acanthamoeba polyphaga (Amoeba).